A 459-amino-acid chain; its full sequence is Cysteine--tRNA ligase (459 aa).

Position 28 (cysteine 28) interacts with Zn(2+). Residues 30 to 40 (VTIYDLCHIGH) carry the 'HIGH' region motif. Zn(2+) contacts are provided by cysteine 209, histidine 234, and glutamate 238. The 'KMSKS' region motif lies at 266–270 (KMSKS). Residue lysine 269 participates in ATP binding.

This sequence belongs to the class-I aminoacyl-tRNA synthetase family. Monomer. Requires Zn(2+) as cofactor.

Its subcellular location is the cytoplasm. It carries out the reaction tRNA(Cys) + L-cysteine + ATP = L-cysteinyl-tRNA(Cys) + AMP + diphosphate. In Shewanella baltica (strain OS195), this protein is Cysteine--tRNA ligase.